Consider the following 193-residue polypeptide: Peptidyl-tRNA hydrolase (193 aa).

Residue Y15 participates in tRNA binding. H20 functions as the Proton acceptor in the catalytic mechanism. Residues F65, N67, and N113 each contribute to the tRNA site.

The protein belongs to the PTH family. As to quaternary structure, monomer.

It localises to the cytoplasm. The catalysed reaction is an N-acyl-L-alpha-aminoacyl-tRNA + H2O = an N-acyl-L-amino acid + a tRNA + H(+). Functionally, hydrolyzes ribosome-free peptidyl-tRNAs (with 1 or more amino acids incorporated), which drop off the ribosome during protein synthesis, or as a result of ribosome stalling. Catalyzes the release of premature peptidyl moieties from peptidyl-tRNA molecules trapped in stalled 50S ribosomal subunits, and thus maintains levels of free tRNAs and 50S ribosomes. This Ehrlichia ruminantium (strain Welgevonden) protein is Peptidyl-tRNA hydrolase.